A 265-amino-acid polypeptide reads, in one-letter code: Mlc titration factor A (265 aa).

Zn(2+)-binding residues include His111, His148, His152, and Glu211.

This sequence belongs to the MtfA family. In terms of assembly, interacts with Mlc. Zn(2+) serves as cofactor.

The protein resides in the cytoplasm. Involved in the modulation of the activity of the glucose-phosphotransferase system (glucose-PTS). Interacts with the transcriptional repressor Mlc, preventing its interaction with DNA and leading to the modulation of expression of genes regulated by Mlc, including ptsG, which encodes the PTS system glucose-specific EIICB component. Its function is as follows. Shows zinc-dependent metallopeptidase activity. This chain is Mlc titration factor A, found in Escherichia coli (strain 55989 / EAEC).